A 231-amino-acid chain; its full sequence is Uridylate kinase (231 aa).

6 to 9 (KLSG) contacts ATP. The interval 14–19 (GEGGRG) is involved in allosteric activation by GTP. The ATP site is built by G49 and R53. Residues D66 and 127 to 134 (TSNPFFTT) each bind UMP. ATP contacts are provided by T154, Y160, and D163.

Belongs to the UMP kinase family. Homohexamer.

Its subcellular location is the cytoplasm. It catalyses the reaction UMP + ATP = UDP + ADP. It functions in the pathway pyrimidine metabolism; CTP biosynthesis via de novo pathway; UDP from UMP (UMPK route): step 1/1. Allosterically activated by GTP. Inhibited by UTP. Functionally, catalyzes the reversible phosphorylation of UMP to UDP. The polypeptide is Uridylate kinase (Thermotoga maritima (strain ATCC 43589 / DSM 3109 / JCM 10099 / NBRC 100826 / MSB8)).